Reading from the N-terminus, the 401-residue chain is MVDLEQEFALGGRCLAFHGPLMYEAKILKIWDPSSKMYTSIPNDKPGGSSQATKEIKPQKLGEDESIPEEIINGKCFFIHYQGWKSSWDEWVGYDRIRAYNEENIAMKKRLANEAKEAKKSLLEQQKKKKLSTSLGGPSNGGKRKGDSRSNASISKSTSQSFLTSSVSGRKSGRSSANSLHPGSSLRSSSDQNGNDDRRRSSSLSPNMLHHIAGYPTPKISLQIPIKLKSVLVDDWEYVTKDKKICRLPADVTVEMVLNKYEHEVSQELESPGSQSQLSEYCAGLKLYFDKCLGNMLLYRLERLQYDELLKKSSKDQKPLVPIRIYGAIHLLRLISVLPELISSTTMDLQSCQLLIKQTEDFLVWLLMHVDEYFNDKDPNRSDDALYVNTSSQYEGVALGM.

The Tudor-knot domain occupies 13 to 98 (RCLAFHGPLM…DEWVGYDRIR (86 aa)). Over residues 39–53 (TSIPNDKPGGSSQAT) the composition is skewed to polar residues. Disordered stretches follow at residues 39 to 65 (TSIP…GEDE) and 117 to 210 (EAKK…NMLH). 2 stretches are compositionally biased toward basic and acidic residues: residues 54–63 (KEIKPQKLGE) and 117–126 (EAKKSLLEQQ). Residues 153 to 190 (SISKSTSQSFLTSSVSGRKSGRSSANSLHPGSSLRSSS) are compositionally biased toward low complexity. Phosphoserine is present on Ser201. The region spanning 216 to 399 (PTPKISLQIP…TSSQYEGVAL (184 aa)) is the MRG domain.

It belongs to the MRG family. In terms of assembly, component of the NuA4 histone acetyltransferase complex composed of at least ACT1, ARP4, YAF9, VID21, SWC4, EAF3, EAF5, EAF6, EAF7, EPL1, ESA1, TRA1 and YNG2.

The protein resides in the nucleus. In terms of biological role, component of the NuA4 histone acetyltransferase complex which is involved in transcriptional activation of selected genes principally by acetylation of nucleosomal histone H4 and H2A. The NuA4 complex is also involved in DNA repair. This Saccharomyces cerevisiae (strain ATCC 204508 / S288c) (Baker's yeast) protein is Chromatin modification-related protein EAF3 (EAF3).